A 1433-amino-acid chain; its full sequence is Probable ATP-dependent RNA helicase spindle-E (1433 aa).

Positions 76–98 (NRTLDELDSDDEEENMQEQPSVR) are disordered. Residues 81–91 (ELDSDDEEENM) show a composition bias toward acidic residues. Residues 127–294 (MKAIRENPVV…FATSSAFPPV (168 aa)) enclose the Helicase ATP-binding domain. 140 to 147 (GETGCGKT) contributes to the ATP binding site. The DEAH box motif lies at 240-243 (DEVH). Positions 354–526 (QSLQSYEEAK…NSVLKAKELE (173 aa)) constitute a Helicase C-terminal domain. The Tudor domain maps to 937-1000 (ASAVTKGLQL…RLMPHELKRD (64 aa)).

This sequence belongs to the DEAD box helicase family. DEAH subfamily.

It localises to the cytoplasm. The enzyme catalyses ATP + H2O = ADP + phosphate + H(+). Its function is as follows. Probable ATP-binding RNA helicase which plays a central role during spermatogenesis and oogenesis by repressing transposable elements and preventing their mobilization, which is essential for the germline integrity. Acts via the piRNA metabolic process, which mediates the repression of transposable elements during meiosis by forming complexes composed of piRNAs and Piwi and govern the methylation and subsequent repression of transposons. Involved in the repression of LTR retrotransposon copia. Also involved in telomere regulation by repressing specialized telomeric retroelements HeT-A, TAHRE, and TART; Drosophila telomeres being maintained by transposition of specialized telomeric retroelements. Involved in telomeric trans-silencing, a repression mechanism by which a transposon or a transgene inserted in subtelomeric heterochromatin has the capacity to repress in trans in the female germline, a homologous transposon, or transgene located in euchromatin. Involved in the repression of testis-expressed Stellate genes by the homologous Su(Ste) repeats. Required for anteroposterior and dorsoventral axis formation during oogenesis. The protein is Probable ATP-dependent RNA helicase spindle-E (spn-E) of Drosophila virilis (Fruit fly).